Reading from the N-terminus, the 242-residue chain is Probable L-ribulose-5-phosphate 4-epimerase UlaF (242 aa).

Substrate-binding positions include 31–32 (GN), 48–49 (SG), and 78–79 (SS). The Zn(2+) site is built by Asp80, His99, and His101. Asp124 acts as the Proton donor/acceptor in catalysis. A Zn(2+)-binding site is contributed by His175. Catalysis depends on Tyr234, which acts as the Proton donor/acceptor.

This sequence belongs to the aldolase class II family. AraD/FucA subfamily. It depends on Zn(2+) as a cofactor.

The catalysed reaction is L-ribulose 5-phosphate = D-xylulose 5-phosphate. The protein operates within cofactor degradation; L-ascorbate degradation; D-xylulose 5-phosphate from L-ascorbate: step 4/4. Catalyzes the isomerization of L-ribulose 5-phosphate to D-xylulose 5-phosphate. Is involved in the anaerobic L-ascorbate utilization. In Mycoplasma pneumoniae (strain ATCC 29342 / M129 / Subtype 1) (Mycoplasmoides pneumoniae), this protein is Probable L-ribulose-5-phosphate 4-epimerase UlaF.